The chain runs to 209 residues: Probable peptide export ATP-binding protein YydI (209 aa).

One can recognise an ABC transporter domain in the interval 1 to 207 (MNIANYTLKV…SVDKLIEVYI (207 aa)). 33-40 (GKNGVGKS) contacts ATP.

The protein belongs to the ABC transporter superfamily. The complex is composed of two ATP-binding proteins (YydI), two transmembrane proteins (YydJ).

Its function is as follows. Suggested to be part of an ABC transporter complex YydIJ involved in export of the modified peptide YydF. Responsible for energy coupling to the transport system. This chain is Probable peptide export ATP-binding protein YydI (yydI), found in Bacillus subtilis (strain 168).